We begin with the raw amino-acid sequence, 402 residues long: Beta sliding clamp (402 aa).

The protein belongs to the beta sliding clamp family. As to quaternary structure, forms a ring-shaped head-to-tail homodimer around DNA which binds and tethers DNA polymerases and other proteins to the DNA. The DNA replisome complex has a single clamp-loading complex (3 tau and 1 each of delta, delta', psi and chi subunits) which binds 3 Pol III cores (1 core on the leading strand and 2 on the lagging strand) each with a beta sliding clamp dimer. Additional proteins in the replisome are other copies of gamma, psi and chi, Ssb, DNA helicase and RNA primase.

It localises to the cytoplasm. Confers DNA tethering and processivity to DNA polymerases and other proteins. Acts as a clamp, forming a ring around DNA (a reaction catalyzed by the clamp-loading complex) which diffuses in an ATP-independent manner freely and bidirectionally along dsDNA. Initially characterized for its ability to contact the catalytic subunit of DNA polymerase III (Pol III), a complex, multichain enzyme responsible for most of the replicative synthesis in bacteria; Pol III exhibits 3'-5' exonuclease proofreading activity. The beta chain is required for initiation of replication as well as for processivity of DNA replication. The chain is Beta sliding clamp (dnaN) from Mycobacterium tuberculosis (strain CDC 1551 / Oshkosh).